Here is a 215-residue protein sequence, read N- to C-terminus: S-crystallin 2 (215 aa).

Positions 2-80 constitute a GST N-terminal domain; sequence PSYTLHYFNH…YLAREFGFHG (79 aa). Positions 82–215 constitute a GST C-terminal domain; the sequence is NNLDMARVDF…YLKSRSSTDF (134 aa).

The protein belongs to the GST superfamily. As to expression, lens.

Functionally, S-crystallins are structural components of squids and octopi eye lens. Contains relatively little GST activity (1/1000 of that of mammalian GST enzyme). The chain is S-crystallin 2 (OCTS2) from Octopus vulgaris (Common octopus).